The sequence spans 492 residues: Probable cytosol aminopeptidase (492 aa).

Mn(2+) contacts are provided by lysine 262 and aspartate 267. Residue lysine 274 is part of the active site. Mn(2+) is bound by residues aspartate 286, aspartate 345, and glutamate 347. Arginine 349 is an active-site residue.

This sequence belongs to the peptidase M17 family. Requires Mn(2+) as cofactor.

It is found in the cytoplasm. The enzyme catalyses Release of an N-terminal amino acid, Xaa-|-Yaa-, in which Xaa is preferably Leu, but may be other amino acids including Pro although not Arg or Lys, and Yaa may be Pro. Amino acid amides and methyl esters are also readily hydrolyzed, but rates on arylamides are exceedingly low.. The catalysed reaction is Release of an N-terminal amino acid, preferentially leucine, but not glutamic or aspartic acids.. Presumably involved in the processing and regular turnover of intracellular proteins. Catalyzes the removal of unsubstituted N-terminal amino acids from various peptides. The sequence is that of Probable cytosol aminopeptidase from Acaryochloris marina (strain MBIC 11017).